Reading from the N-terminus, the 227-residue chain is Albumin-2 (227 aa).

Hemopexin repeat units follow at residues Pro-3–Pro-46, Ser-61–Phe-111, Glu-117–Phe-165, and Glu-171–Leu-221. Ca(2+) contacts are provided by Asn-7 and Asp-65. Ser-118 provides a ligand contact to spermine. Ca(2+) contacts are provided by Asp-121 and Asp-175.

Monomer and homodimer. Dimers are prevalent in solution.

Its subcellular location is the cytoplasm. It is found in the cytosol. Its function is as follows. May play a role in response to oxidative stress and polyamine biosynthesis. The monomeric form binds one hemin per monomer. In the dimeric form, about half of the dimers bind one molecule of spermine each under physiological conditions. Ligand binding is mutually exclusive as binding of hemin leads to dissociation of the dimer. The polypeptide is Albumin-2 (Lathyrus sativus (White vetchling)).